Reading from the N-terminus, the 31-residue chain is Ranatuerin-2PL (31 aa).

Cys-23 and Cys-29 form a disulfide bridge.

In terms of tissue distribution, expressed by the skin glands.

It localises to the secreted. In terms of biological role, antimicrobial activity against Gram-negative bacterium E.coli. This chain is Ranatuerin-2PL, found in Lithobates palustris (Pickerel frog).